A 199-amino-acid chain; its full sequence is NAD(P)H dehydrogenase (quinone) (199 aa).

The region spanning 4 to 190 (MLVLYYSAYG…DGARFQGRRV (187 aa)) is the Flavodoxin-like domain. FMN contacts are provided by residues 10 to 15 (SAYGYM) and 78 to 80 (TRY). NAD(+) is bound at residue tyrosine 12. Residue tryptophan 98 coordinates substrate. FMN contacts are provided by residues 113–119 (STATQHG) and histidine 134. A disordered region spans residues 157–181 (GGAPYGMTTTADGDGSRQPSAQELD). The segment covering 163–177 (MTTTADGDGSRQPSA) has biased composition (polar residues).

This sequence belongs to the WrbA family. Requires FMN as cofactor.

The enzyme catalyses a quinone + NADH + H(+) = a quinol + NAD(+). The catalysed reaction is a quinone + NADPH + H(+) = a quinol + NADP(+). This is NAD(P)H dehydrogenase (quinone) from Brucella melitensis biotype 2 (strain ATCC 23457).